The primary structure comprises 628 residues: Probable potassium transport system protein Kup (628 aa).

Helical transmembrane passes span 15–35, 55–75, 104–124, 142–162, 173–193, 210–230, 252–272, 281–301, 342–362, 372–392, 400–420, and 426–446; these read LAIA…LYSL, VISL…VLFV, AGLL…DAVI, PHLS…LFWI, LFGP…LWHI, TFMA…VLVL, WYVL…ALLM, PFFL…STIA, IYVP…VIAF, YGIA…VVMV, LLVA…FGAN, and EGGW…MTWY.

The protein belongs to the HAK/KUP transporter (TC 2.A.72) family.

It is found in the cell inner membrane. The catalysed reaction is K(+)(in) + H(+)(in) = K(+)(out) + H(+)(out). Transport of potassium into the cell. Likely operates as a K(+):H(+) symporter. This chain is Probable potassium transport system protein Kup, found in Paraburkholderia xenovorans (strain LB400).